A 1929-amino-acid polypeptide reads, in one-letter code: Myoferlin (1929 aa).

The segment at 1 to 53 (MISYEPPPSAISNPTDPGGTTIIQGDGENDEEEDRDIVDAGFNPSVPGAPGQT) is disordered. The segment covering 27-36 (GENDEEEDRD) has biased composition (acidic residues). C2 domains follow at residues 62–179 (VKGK…RKWV) and 218–354 (EDDD…EEYD). Residues D267, D275, D323, D325, and D331 each coordinate Ca(2+). Positions 898–907 (RRLVRKRKKD) are enriched in basic residues. The disordered stretch occupies residues 898-918 (RRLVRKRKKDPKVSTTSKAAL). 4 C2 domains span residues 996–1124 (GANT…LLWY), 1159–1283 (RAPQ…TKHE), 1408–1527 (IPYP…SHCG), and 1645–1793 (GPPG…EKCS). Residues D1028, D1034, D1090, and D1092 each contribute to the Ca(2+) site. Residues D1442, D1448, D1497, D1499, D1764, S1767, and D1770 each contribute to the Ca(2+) site. Residues 1845 to 1858 (DAEERPAGKGRDEP) show a composition bias toward basic and acidic residues. Positions 1845–1867 (DAEERPAGKGRDEPNMNPKLDPP) are disordered. Residues 1894 to 1914 (WVFIGLIILLLVLLFLGVFFY) traverse the membrane as a helical segment.

This sequence belongs to the ferlin family. Ca(2+) is required as a cofactor.

It localises to the cell membrane. Its subcellular location is the nucleus membrane. The protein resides in the cytoplasmic vesicle membrane. In terms of biological role, may play a role in membrane regeneration and repair. This is Myoferlin (myof) from Xenopus tropicalis (Western clawed frog).